We begin with the raw amino-acid sequence, 559 residues long: Aminopeptidase Q (559 aa).

Residues 1-13 are Cytoplasmic-facing; that stretch reads MSRPFSSGVYVSR. Residues 14–34 traverse the membrane as a helical; Signal-anchor for type II membrane protein segment; that stretch reads GVALLLAALTAVLLLVLVALA. The Lumenal segment spans residues 35–559; the sequence is SLYGSCAHVQ…VPFRHFLAEH (525 aa). Residues asparagine 121 and asparagine 129 are each glycosylated (N-linked (GlcNAc...) asparagine). Glutamate 237 provides a ligand contact to substrate. 3 N-linked (GlcNAc...) asparagine glycosylation sites follow: asparagine 258, asparagine 285, and asparagine 343. Position 376–380 (376–380) interacts with substrate; sequence GAMEN. Histidine 412 contacts Zn(2+). Glutamate 413 (proton acceptor) is an active-site residue. 2 residues coordinate Zn(2+): histidine 416 and glutamate 435.

This sequence belongs to the peptidase M1 family. In terms of assembly, homodimer. Zn(2+) is required as a cofactor. In terms of processing, N-glycosylated.

Its subcellular location is the membrane. With respect to regulation, inhibited by bestatin. Metalloprotease which may be important for placentation by regulating biological activity of key peptides at the embryo-maternal interface. On synthetic substrates it shows a marked preference for Leu-4-methylcoumaryl-7-amide (Leu-MCA) over Met-MCA, Arg-LCA and Lys-LCA. Cleaves the N-terminal amino acid of several peptides such as angiotensin-3, kisspeptin-10 and endokinin C. In Mus musculus (Mouse), this protein is Aminopeptidase Q.